Here is a 79-residue protein sequence, read N- to C-terminus: Serine protease inhibitor Kazal-type 1-like (79 aa).

A signal peptide spans 1-23; sequence MKVAIIFLLSALALLNLAGNTTA. Residues 26 to 79 form the Kazal-like domain; that stretch reads IGKKANCPNTLVGCPRDYDPVCGTDGKTYANECILCFENRKFGTSIRIQRRGLC. Disulfide bonds link C32–C61, C39–C58, and C47–C79.

As to expression, seminal vesicle.

The protein resides in the secreted. In terms of biological role, serine protease inhibitor which exhibits anti-trypsin activity. In the pancreas, protects against trypsin-catalyzed premature activation of zymogens. Functionally, in the male reproductive tract, binds to sperm heads where it modulates sperm capacitance by inhibiting calcium uptake and nitrogen oxide (NO) production. The chain is Serine protease inhibitor Kazal-type 1-like from Rattus norvegicus (Rat).